The primary structure comprises 356 residues: 1-acyl-sn-glycerol-3-phosphate acyltransferase LPAT1, chloroplastic (356 aa).

A chloroplast-targeting transit peptide spans Met1–Pro56. The helical transmembrane segment at Gly127–Ile147 threads the bilayer. An HXXXXD motif motif is present at residues His202–Asp207. A helical membrane pass occupies residues Thr224–Leu244.

This sequence belongs to the 1-acyl-sn-glycerol-3-phosphate acyltransferase family. As to expression, widely expressed. Expressed at higher level in leaves. Expressed at lower level in silique walls compared to leaves.

The protein resides in the plastid. Its subcellular location is the chloroplast membrane. It catalyses the reaction a fatty acyl-[ACP] + a 1-acyl-sn-glycero-3-phosphate = a 1,2-diacyl-sn-glycero-3-phosphate + holo-[ACP]. The catalysed reaction is a 1-acyl-sn-glycero-3-phosphate + an acyl-CoA = a 1,2-diacyl-sn-glycero-3-phosphate + CoA. It functions in the pathway phospholipid metabolism; CDP-diacylglycerol biosynthesis; CDP-diacylglycerol from sn-glycerol 3-phosphate: step 2/3. In terms of biological role, plastidial enzyme of the prokaryotic glycerol-3-phosphate pathway that converts lysophosphatidic acid (LPA) into phosphatidic acid by incorporating an acyl moiety at position sn-2. Utilizes palmitoyl-ACP (16:0-ACP) to produce phosphatidic acid containing a saturated group at position sn-2, which is characteristic of lipids synthesized by the prokaryotic pathway. In vitro, can use 16:0-CoA as acyl donor. Essential for embryo development during the transition from the globular to the heart stage when chloroplasts begin to form. This Arabidopsis thaliana (Mouse-ear cress) protein is 1-acyl-sn-glycerol-3-phosphate acyltransferase LPAT1, chloroplastic.